A 181-amino-acid chain; its full sequence is Ribulose bisphosphate carboxylase small subunit, chloroplastic 2 (181 aa).

The transit peptide at 1–54 (MASSMLSSAAVVTSPAQATMVAPFTGLKSSAAFPVTRKANNDITSIASNGGRVS) directs the protein to the chloroplast.

The protein belongs to the RuBisCO small chain family. In terms of assembly, heterohexadecamer of 8 large and 8 small subunits.

The protein resides in the plastid. Its subcellular location is the chloroplast. Functionally, ruBisCO catalyzes two reactions: the carboxylation of D-ribulose 1,5-bisphosphate, the primary event in carbon dioxide fixation, as well as the oxidative fragmentation of the pentose substrate. Both reactions occur simultaneously and in competition at the same active site. Although the small subunit is not catalytic it is essential for maximal activity. The chain is Ribulose bisphosphate carboxylase small subunit, chloroplastic 2 from Brassica napus (Rape).